The sequence spans 98 residues: uncharacterized protein (98 aa).

Residues 37–91 form the HTH cro/C1-type domain; the sequence is LITSRQQLGISQKQLETLSGVKQPMIARIEKGQTNPQLETLLKLLAPLGKTLSIV. Residues 48 to 67 constitute a DNA-binding region (H-T-H motif); the sequence is QKQLETLSGVKQPMIARIEK.

This is an uncharacterized protein from Haemophilus influenzae (strain ATCC 51907 / DSM 11121 / KW20 / Rd).